The primary structure comprises 150 residues: MRFKGEFFNAIDAKGRASIPAKFRETLSSVYGDERLIVTQSDGGLAAYPYQEWHKMLERVEALPSNDLKEAINLAIISPAVECSFDKQGRIQLPKAQRCYAGLESEIREIVVVGAIDKIMIWNRTKHIERREQAEAFLRAQSQELKNLGF.

2 consecutive SpoVT-AbrB domains span residues Glu6–Glu52 and Ala80–Lys126.

Belongs to the MraZ family. As to quaternary structure, forms oligomers.

It localises to the cytoplasm. It is found in the nucleoid. The protein is Transcriptional regulator MraZ of Syntrophotalea carbinolica (strain DSM 2380 / NBRC 103641 / GraBd1) (Pelobacter carbinolicus).